The primary structure comprises 95 residues: Aspartyl/glutamyl-tRNA(Asn/Gln) amidotransferase subunit C (95 aa).

Belongs to the GatC family. Heterotrimer of A, B and C subunits.

The catalysed reaction is L-glutamyl-tRNA(Gln) + L-glutamine + ATP + H2O = L-glutaminyl-tRNA(Gln) + L-glutamate + ADP + phosphate + H(+). It catalyses the reaction L-aspartyl-tRNA(Asn) + L-glutamine + ATP + H2O = L-asparaginyl-tRNA(Asn) + L-glutamate + ADP + phosphate + 2 H(+). Functionally, allows the formation of correctly charged Asn-tRNA(Asn) or Gln-tRNA(Gln) through the transamidation of misacylated Asp-tRNA(Asn) or Glu-tRNA(Gln) in organisms which lack either or both of asparaginyl-tRNA or glutaminyl-tRNA synthetases. The reaction takes place in the presence of glutamine and ATP through an activated phospho-Asp-tRNA(Asn) or phospho-Glu-tRNA(Gln). This is Aspartyl/glutamyl-tRNA(Asn/Gln) amidotransferase subunit C from Laribacter hongkongensis (strain HLHK9).